The sequence spans 616 residues: Chaperone protein HscA (616 aa).

It belongs to the heat shock protein 70 family.

Functionally, chaperone involved in the maturation of iron-sulfur cluster-containing proteins. Has a low intrinsic ATPase activity which is markedly stimulated by HscB. Involved in the maturation of IscU. The chain is Chaperone protein HscA from Salmonella paratyphi B (strain ATCC BAA-1250 / SPB7).